The primary structure comprises 227 residues: Cytochrome c oxidase subunit 2 (227 aa).

At 1–26 (MATWSNLSIQDGASPLMEQLSFFHDD) the chain is on the mitochondrial intermembrane side. Residues 27–48 (HTMVVLLITVIVGYALSYMLFN) form a helical membrane-spanning segment. At 49–62 (AYTNRNMLHGHLIE) the chain is on the mitochondrial matrix side. A helical membrane pass occupies residues 63–82 (TIWTALPAITLIFIALPSLR). Residues 83-227 (LLYLLDDSVD…LFIKWLSKMI (145 aa)) are Mitochondrial intermembrane-facing. The Cu cation site is built by histidine 161, cysteine 196, glutamate 198, cysteine 200, histidine 204, and methionine 207. Glutamate 198 is a Mg(2+) binding site.

It belongs to the cytochrome c oxidase subunit 2 family. As to quaternary structure, component of the cytochrome c oxidase (complex IV, CIV), a multisubunit enzyme composed of a catalytic core of 3 subunits and several supernumerary subunits. The complex exists as a monomer or a dimer and forms supercomplexes (SCs) in the inner mitochondrial membrane with ubiquinol-cytochrome c oxidoreductase (cytochrome b-c1 complex, complex III, CIII). It depends on Cu cation as a cofactor.

The protein localises to the mitochondrion inner membrane. It catalyses the reaction 4 Fe(II)-[cytochrome c] + O2 + 8 H(+)(in) = 4 Fe(III)-[cytochrome c] + 2 H2O + 4 H(+)(out). In terms of biological role, component of the cytochrome c oxidase, the last enzyme in the mitochondrial electron transport chain which drives oxidative phosphorylation. The respiratory chain contains 3 multisubunit complexes succinate dehydrogenase (complex II, CII), ubiquinol-cytochrome c oxidoreductase (cytochrome b-c1 complex, complex III, CIII) and cytochrome c oxidase (complex IV, CIV), that cooperate to transfer electrons derived from NADH and succinate to molecular oxygen, creating an electrochemical gradient over the inner membrane that drives transmembrane transport and the ATP synthase. Cytochrome c oxidase is the component of the respiratory chain that catalyzes the reduction of oxygen to water. Electrons originating from reduced cytochrome c in the intermembrane space (IMS) are transferred via the dinuclear copper A center (CU(A)) of subunit 2 and heme A of subunit 1 to the active site in subunit 1, a binuclear center (BNC) formed by heme A3 and copper B (CU(B)). The BNC reduces molecular oxygen to 2 water molecules using 4 electrons from cytochrome c in the IMS and 4 protons from the mitochondrial matrix. This chain is Cytochrome c oxidase subunit 2 (COII), found in Schistocerca gregaria (Desert locust).